Here is a 190-residue protein sequence, read N- to C-terminus: Elongation factor P-like protein (190 aa).

The protein belongs to the elongation factor P family.

The sequence is that of Elongation factor P-like protein from Shigella boydii serotype 4 (strain Sb227).